The primary structure comprises 61 residues: Metallothionein-1 (61 aa).

Met1 bears the N-acetylmethionine mark. The segment at 1–29 is beta; it reads MDPNCSCSTGGSCTCTSSCACKNCKCTSC. A divalent metal cation contacts are provided by Cys5, Cys7, Cys13, Cys15, Cys19, Cys21, Cys24, Cys26, Cys29, Cys33, Cys34, Cys36, Cys37, Cys41, Cys44, Cys48, Cys50, Cys57, Cys59, and Cys60. The alpha stretch occupies residues 30–61; that stretch reads KKSCCSCCPVGCSKCAQGCVCKGAADKCTCCA.

It belongs to the metallothionein superfamily. Type 1 family.

In terms of biological role, metallothioneins have a high content of cysteine residues that bind various heavy metals; these proteins are transcriptionally regulated by both heavy metals and glucocorticoids. The polypeptide is Metallothionein-1 (Mt1) (Mus musculus (Mouse)).